We begin with the raw amino-acid sequence, 206 residues long: MAKGLIGKKVGMSQIFDEQGNIIPVTVLEVGPCAVSQVKSVENDGYEAIQLAFQDTKEFQISKAEKNHLAKASLGPKKVLREFRSFGDSPATGSVLKVQDIFAVSDVVKVTGVSKGRGFQGVVKRHGHAGGPGGHGSRFHRHPGSMGANSTPSRVFKGVKLPGRTGSQQTTVRNLKVVRINEEKNLVFVSGAVPGTTNTVITIEKI.

Residues 122–154 (VVKRHGHAGGPGGHGSRFHRHPGSMGANSTPSR) form a disordered region.

It belongs to the universal ribosomal protein uL3 family. In terms of assembly, part of the 50S ribosomal subunit. Forms a cluster with proteins L14 and L19.

Functionally, one of the primary rRNA binding proteins, it binds directly near the 3'-end of the 23S rRNA, where it nucleates assembly of the 50S subunit. This Leptospira borgpetersenii serovar Hardjo-bovis (strain JB197) protein is Large ribosomal subunit protein uL3.